The sequence spans 512 residues: MEISYGRALWRNFLGQSPDWYKLTLLAFLIINPLVFIFQPFMAGWLLVAEFIFTLAMALKCYPLLPGGLLAIEAVVIGMTSAERVKDELATNLEVLLLLMFMVAGIYFMKQLLLFIFTRLLLSIRSKTVLSLSFCLAAAFLSAFLDALTVVAVVISVAIGFYGIYHRVASSSSDNDLQDDSQLDVNKRDVLEQFRAFLRSLMMHAGVGTALGGVMTMVGEPQNLIIAKAAGWNFTEFFLRVAPVSVPVFICGMLTCFLLERTKTFGYGVQLPGAVRDVLHEFDLKSRSQRTRQEKLALIAQGIIGAWLIFALAFHLAEVGLIGLSVIILATSFTGVTDEHAIGKAFTEALPFTALLAVFFAIVAVIIDQQLFTPIIHFVLQASPDSQLSLFYLFNGLLSSISDNVFVGSVYINEAKTALESGAIGINQFELLAVAINTGTNLPSVATPNGQAAFLFLLTSALAPLIRLSYGRMVWMALPYTVVLTLVGLLCVKFTLIPYTQWLMQIGILAAH.

Transmembrane regions (helical) follow at residues 28-48 (FLII…WLLV), 52-72 (IFTL…LLAI), 97-117 (LLLM…LFIF), 144-164 (FLDA…FYGI), 201-221 (LMMH…VGEP), 237-257 (FFLR…LTCF), 296-330 (LALI…IILA), 347-367 (TEAL…AVII), 390-410 (LFYL…VGSV), 446-466 (ATPN…APLI), and 474-494 (VWMA…CVKF).

The protein belongs to the NhaB Na(+)/H(+) (TC 2.A.34) antiporter family.

The protein localises to the cell inner membrane. It catalyses the reaction 2 Na(+)(in) + 3 H(+)(out) = 2 Na(+)(out) + 3 H(+)(in). Functionally, na(+)/H(+) antiporter that extrudes sodium in exchange for external protons. The polypeptide is Na(+)/H(+) antiporter NhaB (Enterobacter sp. (strain 638)).